Reading from the N-terminus, the 397-residue chain is 8-amino-7-oxononanoate synthase (397 aa).

Arg23 lines the substrate pocket. 110–111 contributes to the pyridoxal 5'-phosphate binding site; the sequence is GY. His135 is a substrate binding site. Residues Ser181, His209, and Thr237 each contribute to the pyridoxal 5'-phosphate site. N6-(pyridoxal phosphate)lysine is present on Lys240. Thr354 provides a ligand contact to substrate.

It belongs to the class-II pyridoxal-phosphate-dependent aminotransferase family. BioF subfamily. Homodimer. The cofactor is pyridoxal 5'-phosphate.

It catalyses the reaction 6-carboxyhexanoyl-[ACP] + L-alanine + H(+) = (8S)-8-amino-7-oxononanoate + holo-[ACP] + CO2. The protein operates within cofactor biosynthesis; biotin biosynthesis. Functionally, catalyzes the decarboxylative condensation of pimeloyl-[acyl-carrier protein] and L-alanine to produce 8-amino-7-oxononanoate (AON), [acyl-carrier protein], and carbon dioxide. In Anaeromyxobacter dehalogenans (strain 2CP-C), this protein is 8-amino-7-oxononanoate synthase.